A 459-amino-acid polypeptide reads, in one-letter code: tRNA modification GTPase MnmE (459 aa).

3 residues coordinate (6S)-5-formyl-5,6,7,8-tetrahydrofolate: R20, E85, and R124. The 160-residue stretch at 221–380 (GLSTVIIGRP…LEEAIQSLFY (160 aa)) folds into the TrmE-type G domain. N231 lines the K(+) pocket. GTP is bound by residues 231–236 (NVGKSS), 250–256 (TDIPGTT), and 275–278 (DTAG). Residue S235 participates in Mg(2+) binding. Positions 250, 252, and 255 each coordinate K(+). A Mg(2+)-binding site is contributed by T256. K459 contributes to the (6S)-5-formyl-5,6,7,8-tetrahydrofolate binding site.

This sequence belongs to the TRAFAC class TrmE-Era-EngA-EngB-Septin-like GTPase superfamily. TrmE GTPase family. In terms of assembly, homodimer. Heterotetramer of two MnmE and two MnmG subunits. K(+) is required as a cofactor.

The protein localises to the cytoplasm. Functionally, exhibits a very high intrinsic GTPase hydrolysis rate. Involved in the addition of a carboxymethylaminomethyl (cmnm) group at the wobble position (U34) of certain tRNAs, forming tRNA-cmnm(5)s(2)U34. The sequence is that of tRNA modification GTPase MnmE from Bacillus subtilis (strain 168).